Here is a 315-residue protein sequence, read N- to C-terminus: Adenine deaminase (315 aa).

Residues histidine 14, histidine 16, and histidine 194 each contribute to the Zn(2+) site. Glutamate 197 acts as the Proton donor in catalysis. Residue aspartate 275 participates in Zn(2+) binding. Aspartate 276 is a binding site for substrate.

This sequence belongs to the metallo-dependent hydrolases superfamily. Adenosine and AMP deaminases family. Adenine deaminase type 2 subfamily. The cofactor is Zn(2+).

The enzyme catalyses adenine + H2O + H(+) = hypoxanthine + NH4(+). Its function is as follows. Catalyzes the hydrolytic deamination of adenine to hypoxanthine. Plays an important role in the purine salvage pathway and in nitrogen catabolism. This is Adenine deaminase from Pseudomonas putida (strain W619).